Here is a 210-residue protein sequence, read N- to C-terminus: Thymidylate kinase (210 aa).

11-18 (GVDGAGKT) is an ATP binding site.

It belongs to the thymidylate kinase family.

The enzyme catalyses dTMP + ATP = dTDP + ADP. Its function is as follows. Phosphorylation of dTMP to form dTDP in both de novo and salvage pathways of dTTP synthesis. In Mycoplasma genitalium (strain ATCC 33530 / DSM 19775 / NCTC 10195 / G37) (Mycoplasmoides genitalium), this protein is Thymidylate kinase (tmk).